Consider the following 227-residue polypeptide: Small ribosomal subunit protein uS3 (227 aa).

A KH type-2 domain is found at 39 to 109 (IHRFFEKLTR…KIVINVDAVD (71 aa)).

Belongs to the universal ribosomal protein uS3 family. Part of the 30S ribosomal subunit. Forms a tight complex with proteins S10 and S14.

Functionally, binds the lower part of the 30S subunit head. Binds mRNA in the 70S ribosome, positioning it for translation. This chain is Small ribosomal subunit protein uS3, found in Mesomycoplasma hyopneumoniae (strain 232) (Mycoplasma hyopneumoniae).